A 283-amino-acid polypeptide reads, in one-letter code: Octanoyl-[GcvH]:protein N-octanoyltransferase (283 aa).

The region spanning 42 to 248 (GQSDAVVRTW…TLQSFGGELY (207 aa)) is the BPL/LPL catalytic domain. The Acyl-thioester intermediate role is filled by Cys147.

Belongs to the octanoyltransferase LipL family.

It catalyses the reaction N(6)-octanoyl-L-lysyl-[glycine-cleavage complex H protein] + L-lysyl-[lipoyl-carrier protein] = N(6)-octanoyl-L-lysyl-[lipoyl-carrier protein] + L-lysyl-[glycine-cleavage complex H protein]. Its pathway is protein modification; protein lipoylation via endogenous pathway; protein N(6)-(lipoyl)lysine from octanoyl-[acyl-carrier-protein]. Functionally, catalyzes the amidotransfer (transamidation) of the octanoyl moiety from octanoyl-GcvH to the lipoyl domain of the E2 subunit of lipoate-dependent enzymes. The chain is Octanoyl-[GcvH]:protein N-octanoyltransferase from Geobacillus kaustophilus (strain HTA426).